The chain runs to 638 residues: ATP-dependent zinc metalloprotease FtsH (638 aa).

The Cytoplasmic segment spans residues 1–15 (MDNNHKGPNDPNSKK). Residues 16–36 (PLLQNPLLLIAIFGIIIFVAM) form a helical membrane-spanning segment. Topologically, residues 37 to 122 (RVMNSDEGFG…INYSGFSESN (86 aa)) are periplasmic. Residues 123 to 143 (FFADILGWLLPVLVILGLWMF) form a helical membrane-spanning segment. At 144-638 (MASRMQKNMG…RLVPLEEHAS (495 aa)) the chain is on the cytoplasmic side. 216–223 (GPPGTGKT) lines the ATP pocket. Histidine 440 provides a ligand contact to Zn(2+). Glutamate 441 is a catalytic residue. Zn(2+) contacts are provided by histidine 444 and aspartate 517.

It in the central section; belongs to the AAA ATPase family. The protein in the C-terminal section; belongs to the peptidase M41 family. In terms of assembly, homohexamer. The cofactor is Zn(2+).

The protein localises to the cell inner membrane. Acts as a processive, ATP-dependent zinc metallopeptidase for both cytoplasmic and membrane proteins. Plays a role in the quality control of integral membrane proteins. This is ATP-dependent zinc metalloprotease FtsH from Helicobacter felis (strain ATCC 49179 / CCUG 28539 / NCTC 12436 / CS1).